The following is a 342-amino-acid chain: Transcription initiation factor TFIID subunit 12 (342 aa).

A disordered region spans residues 1 to 221 (MKMEEFSPPT…QAPPPQMIPA (221 aa)). Positions 12 to 35 (PNNHVIVQANPQIAAALSTNSPMQ) are enriched in polar residues. Composition is skewed to low complexity over residues 39–59 (PPQGHQNPNEQQQQQQFVGQP), 67–89 (PMRMQMPQQQIRQMPYPSPQMRA), 96–146 (QQQQ…HLMG), and 180–192 (QQIMQVQHQQQHQ). Over residues 193–218 (QPPPSQQIQQPPIPQPQQQQAPPPQM) the composition is skewed to pro residues. The 68-residue stretch at 230-297 (EKSKLDDLMQ…EFILKNVYNM (68 aa)) folds into the Histone-fold domain.

It belongs to the TAF12 family. Interacts (via histone-fold domain) with taf-4 (via the histone-fold domain). Interaction may facilitate the nuclear localization of taf-4.

Its subcellular location is the nucleus. Part of the general transcription factor complex TFIID. Plays a role in recruiting taf-4 to the nucleus and thereby activating transcription initiation by RNA polymerase II, as part of the TFIID complex. In Caenorhabditis elegans, this protein is Transcription initiation factor TFIID subunit 12.